The chain runs to 551 residues: RCC1 and BTB domain-containing protein 2 (551 aa).

RCC1 repeat units follow at residues 64 to 115, 117 to 169, 171 to 222, 223 to 274, 276 to 326, and 328 to 382; these read NDEI…VLAT, EGEV…VLTS, GEVF…AVVD, TGEV…VLTD, GQVY…AAKT, and GGHV…TVAE. A BTB domain is found at 394-457; it reads ADLKFLVDGK…LYTDSISLSP (64 aa).

It is found in the cytoplasmic vesicle. The protein resides in the secretory vesicle. It localises to the acrosome. The sequence is that of RCC1 and BTB domain-containing protein 2 (RCBTB2) from Homo sapiens (Human).